The chain runs to 175 residues: Inorganic pyrophosphatase (175 aa).

3 residues coordinate substrate: K30, R44, and Y56. The Mg(2+) site is built by D66, D71, and D103. Residue Y142 participates in substrate binding.

This sequence belongs to the PPase family. Homohexamer. The cofactor is Mg(2+).

The protein resides in the cytoplasm. It carries out the reaction diphosphate + H2O = 2 phosphate + H(+). Functionally, catalyzes the hydrolysis of inorganic pyrophosphate (PPi) forming two phosphate ions. This is Inorganic pyrophosphatase from Yersinia pestis.